Reading from the N-terminus, the 355-residue chain is Guanine nucleotide-binding protein alpha-12 subunit (355 aa).

In terms of domain architecture, G-alpha spans 28-355 (RQINLLLLGS…EQNLKTLMMQ (328 aa)). The G1 motif stretch occupies residues 31–44 (NLLLLGSGESGKST). GTP-binding positions include 36 to 43 (GSGESGKS), 176 to 182 (LFCRKAT), 201 to 205 (DVGGQ), 270 to 273 (NKND), and Ala-327. The Mg(2+) site is built by Ser-43 and Thr-182. Residues 174-182 (DILFCRKAT) form a G2 motif region. The interval 197 to 206 (FRFIDVGGQR) is G3 motif. A G4 motif region spans residues 266–273 (ILFMNKND). Residues 325–330 (TTAVDT) form a G5 motif region.

The protein belongs to the G-alpha family. In terms of assembly, g proteins are composed of 3 units; alpha, beta and gamma. The alpha chain contains the guanine nucleotide binding site.

Guanine nucleotide-binding proteins (G proteins) are involved as modulators or transducers in various transmembrane signaling systems. May play a role in resistance to fungal infection in the epidermis by regulating the up-regulation of several antimicrobial peptides of the NLP and CNC families. Upstream of plc-3, tpa-1 and the p38-like pathway, required for the expression of antimicrobial peptide nlp-29 in the epidermis in response to fungal infection or physical injury. This chain is Guanine nucleotide-binding protein alpha-12 subunit (gpa-12), found in Caenorhabditis elegans.